Reading from the N-terminus, the 340-residue chain is Dihydroorotate dehydrogenase (quinone) (340 aa).

FMN is bound by residues 61–65 and threonine 85; that span reads AGLDK. Position 65 (lysine 65) interacts with substrate. 110-114 contacts substrate; sequence NRMGF. Residues asparagine 138 and asparagine 171 each contribute to the FMN site. Asparagine 171 lines the substrate pocket. The active-site Nucleophile is serine 174. Substrate is bound at residue asparagine 176. Positions 216 and 244 each coordinate FMN. Residue 245-246 coordinates substrate; that stretch reads NT. FMN contacts are provided by residues glycine 267, glycine 296, and 317–318; that span reads YT.

Belongs to the dihydroorotate dehydrogenase family. Type 2 subfamily. Monomer. Requires FMN as cofactor.

The protein resides in the cell membrane. It catalyses the reaction (S)-dihydroorotate + a quinone = orotate + a quinol. It functions in the pathway pyrimidine metabolism; UMP biosynthesis via de novo pathway; orotate from (S)-dihydroorotate (quinone route): step 1/1. Its function is as follows. Catalyzes the conversion of dihydroorotate to orotate with quinone as electron acceptor. The protein is Dihydroorotate dehydrogenase (quinone) of Marinobacter nauticus (strain ATCC 700491 / DSM 11845 / VT8) (Marinobacter aquaeolei).